The chain runs to 324 residues: MVLIEQVVLVASILITFGTCLAATKYAARLFPHFEPLQFYDEATNPMELNIVLAFVVGLIGSVVVLLYFDSQKIKPVLNPTQWQQYRLMEKQKLSDNTALYRFKLPRSNNILGLPIGQHISVQANMGGKTVVRSYTPTSSDDDHGFFDLVVKSYEQGNVSKYIGSMKIGDLLSVKGPKGQMRYAPGLSRHIGMIAGGTGLTPCLQIIRAALKNPADKTQIDFIYANVKETDILLKDELDELALKHKDQFRISYFLNEAPEGWKGGVGFVTKEALEKNLPKPANDIKVLMCGPPPMIKAMTGHLEALGYEKPRTVSKLEDQVFCF.

The helical transmembrane segment at 49–69 (LNIVLAFVVGLIGSVVVLLYF) threads the bilayer. Residues 81 to 184 (TQWQQYRLME…KGPKGQMRYA (104 aa)) enclose the FAD-binding FR-type domain. Residues 164–179 (GSMK…GPKG) and 190–222 (HIGM…QIDF) contribute to the FAD site.

Belongs to the flavoprotein pyridine nucleotide cytochrome reductase family. In terms of assembly, monomer. Component of the 2-(3-amino-3-carboxypropyl)histidine synthase complex composed of DPH1, DPH2, DPH3 and a NADH-dependent reductase, predominantly CBR1. FAD serves as cofactor.

Its subcellular location is the mitochondrion outer membrane. It carries out the reaction 2 Fe(III)-[cytochrome b5] + NADH = 2 Fe(II)-[cytochrome b5] + NAD(+) + H(+). It catalyses the reaction 2 Fe(3+)-[Dph3] + NADH = 2 Fe(2+)-[Dph3] + NAD(+) + H(+). It functions in the pathway protein modification; peptidyl-diphthamide biosynthesis. NADH-dependent reductase for DPH3 and cytochrome b5. Required for the first step of diphthamide biosynthesis, a post-translational modification of histidine which occurs in elongation factor 2. DPH1 and DPH2 transfer a 3-amino-3-carboxypropyl (ACP) group from S-adenosyl-L-methionine (SAM) to a histidine residue, the reaction is assisted by a reduction system comprising DPH3 and a NADH-dependent reductase, predominantly CBR1. By reducing DPH3, also involved in the formation of the tRNA wobble base modification mcm5s 2U (5-methoxycarbonylmethyl-2-thiouridine), mediated by the elongator complex. The cytochrome b5/NADH cytochrome b5 reductase electron transfer system supports the catalytic activity of several sterol biosynthetic enzymes. This is NADH-cytochrome b5 reductase 1 (CBR1) from Mycosarcoma maydis (Corn smut fungus).